We begin with the raw amino-acid sequence, 438 residues long: Aspartate--tRNA(Asp) ligase (438 aa).

Glu170 contributes to the L-aspartate binding site. The interval 192 to 195 (QLYK) is aspartate. Arg214 serves as a coordination point for L-aspartate. ATP is bound by residues 214 to 216 (RAE), 222 to 224 (RHL), and Glu361. Mg(2+) contacts are provided by Glu361 and Ser364. L-aspartate-binding residues include Ser364 and Arg368. An ATP-binding site is contributed by 409–412 (GAER).

The protein belongs to the class-II aminoacyl-tRNA synthetase family. Type 2 subfamily. Homodimer. Mg(2+) is required as a cofactor.

The protein resides in the cytoplasm. It catalyses the reaction tRNA(Asp) + L-aspartate + ATP = L-aspartyl-tRNA(Asp) + AMP + diphosphate. Functionally, catalyzes the attachment of L-aspartate to tRNA(Asp) in a two-step reaction: L-aspartate is first activated by ATP to form Asp-AMP and then transferred to the acceptor end of tRNA(Asp). This chain is Aspartate--tRNA(Asp) ligase, found in Pyrococcus furiosus (strain ATCC 43587 / DSM 3638 / JCM 8422 / Vc1).